Consider the following 570-residue polypeptide: Sulfite reductase [NADPH] hemoprotein beta-component (570 aa).

[4Fe-4S] cluster contacts are provided by Cys434, Cys440, Cys479, and Cys483. Cys483 serves as a coordination point for siroheme.

It belongs to the nitrite and sulfite reductase 4Fe-4S domain family. As to quaternary structure, alpha(8)-beta(8). The alpha component is a flavoprotein, the beta component is a hemoprotein. It depends on siroheme as a cofactor. Requires [4Fe-4S] cluster as cofactor.

It carries out the reaction hydrogen sulfide + 3 NADP(+) + 3 H2O = sulfite + 3 NADPH + 4 H(+). The protein operates within sulfur metabolism; hydrogen sulfide biosynthesis; hydrogen sulfide from sulfite (NADPH route): step 1/1. In terms of biological role, component of the sulfite reductase complex that catalyzes the 6-electron reduction of sulfite to sulfide. This is one of several activities required for the biosynthesis of L-cysteine from sulfate. The protein is Sulfite reductase [NADPH] hemoprotein beta-component of Salmonella enteritidis PT4 (strain P125109).